A 373-amino-acid polypeptide reads, in one-letter code: 4-hydroxy-3-methylbut-2-en-1-yl diphosphate synthase (flavodoxin) (373 aa).

Residues Cys-270, Cys-273, Cys-305, and Glu-312 each coordinate [4Fe-4S] cluster.

Belongs to the IspG family. It depends on [4Fe-4S] cluster as a cofactor.

The enzyme catalyses (2E)-4-hydroxy-3-methylbut-2-enyl diphosphate + oxidized [flavodoxin] + H2O + 2 H(+) = 2-C-methyl-D-erythritol 2,4-cyclic diphosphate + reduced [flavodoxin]. The protein operates within isoprenoid biosynthesis; isopentenyl diphosphate biosynthesis via DXP pathway; isopentenyl diphosphate from 1-deoxy-D-xylulose 5-phosphate: step 5/6. Functionally, converts 2C-methyl-D-erythritol 2,4-cyclodiphosphate (ME-2,4cPP) into 1-hydroxy-2-methyl-2-(E)-butenyl 4-diphosphate. This Pectobacterium atrosepticum (strain SCRI 1043 / ATCC BAA-672) (Erwinia carotovora subsp. atroseptica) protein is 4-hydroxy-3-methylbut-2-en-1-yl diphosphate synthase (flavodoxin).